A 706-amino-acid polypeptide reads, in one-letter code: MAFCNTEYFDQIGNIQKIIHERERRRHELEETLFSYLRSDERLTRLKCAKMRCYAKELHEREQRAKTRNLELLGNVENLASKLKEFSIDCSRLLQKRMEYKNHITRLKKDRRKMGSRGKSEADEHPSRLSTQGLSQSAAIFMGHQTSNGSSRNDGATTKRLPSHTEQIPNHPSLPPSQSGLCMHSHVSKASGAGILSDDILNSGDFLEGRRLSDVREKQMESDWDISQRAREQQRQEELKSPHTTLKEAEVSSRSVTVNKPADIVSLEHCPTRSPSPDTTDPSDASHYMNSGGEDEEESAEDKDDSAPINQNHSDYTSNILKPDTSMHSDSDDSASQSQSGHHASRGNALIQEQSIKAMQTHCGSKHKKVSTWQSGQHHFSESPNRLSMKGFCHLLKCIEQRLETEDVVNLYRISVNEQNLSDDIISICSQRGRLDDIDLHACGAVVLQQLSMLSCSLPHGCLLPSDLINSHWSTTSKPQQIRLCLSAESAVLWDCCFTHMVQLQKQKLLSTDHIIQLFTPLLLPADATYTDKAGKLLKRLLTYKSETHYPSKSESSSSSSLPSLLNDSVEIKPARPSGTNAQTGEEQEIQSAEEDSADQSPVESIPIRETKAYQLLKQSVAQERHWSDSEEEVSEPPDAHKLEKPEVQQDILTQNNRKSVKTKPFSAVQSKAFWGESDDSNSEIEMALRPQSCNTSSHDFDDFYD.

Residues 63–113 (QRAKTRNLELLGNVENLASKLKEFSIDCSRLLQKRMEYKNHITRLKKDRRK) adopt a coiled-coil conformation. Basic residues predominate over residues 105 to 116 (TRLKKDRRKMGS). Disordered regions lie at residues 105–184 (TRLK…LCMH), 215–347 (VREK…ASRG), 571–603 (EIKP…QSPV), 620–665 (SVAQ…KTKP), and 677–706 (ESDD…DFYD). Residues 118–127 (GKSEADEHPS) show a composition bias toward basic and acidic residues. 2 stretches are compositionally biased toward polar residues: residues 128-156 (RLST…NDGA) and 164-180 (HTEQ…SQSG). The span at 215-251 (VREKQMESDWDISQRAREQQRQEELKSPHTTLKEAEV) shows a compositional bias: basic and acidic residues. Residues 272–283 (TRSPSPDTTDPS) are compositionally biased toward low complexity. The span at 293–304 (GEDEEESAEDKD) shows a compositional bias: acidic residues. The segment covering 308–320 (PINQNHSDYTSNI) has biased composition (polar residues). The segment covering 586–598 (EEQEIQSAEEDSA) has biased composition (acidic residues). A compositionally biased stretch (basic and acidic residues) spans 638-648 (PDAHKLEKPEV).

The protein belongs to the kizuna family.

The protein localises to the cytoplasm. The protein resides in the cytoskeleton. It localises to the microtubule organizing center. It is found in the centrosome. Its subcellular location is the cilium basal body. Its function is as follows. Centrosomal protein required for establishing a robust mitotic centrosome architecture that can endure the forces that converge on the centrosomes during spindle formation. Required for stabilizing the expanded pericentriolar material around the centriole. The chain is Centrosomal protein kizuna (kiz) from Danio rerio (Zebrafish).